The chain runs to 119 residues: Flagellar transcriptional regulator FlhD (119 aa).

It belongs to the FlhD family. As to quaternary structure, homodimer; disulfide-linked. Forms a heterohexamer composed of two FlhC and four FlhD subunits. Each FlhC binds a FlhD dimer, forming a heterotrimer, and a hexamer assembles by dimerization of two heterotrimers.

The protein localises to the cytoplasm. Functionally, functions in complex with FlhC as a master transcriptional regulator that regulates transcription of several flagellar and non-flagellar operons by binding to their promoter region. Activates expression of class 2 flagellar genes, including fliA, which is a flagellum-specific sigma factor that turns on the class 3 genes. Also regulates genes whose products function in a variety of physiological pathways. This chain is Flagellar transcriptional regulator FlhD, found in Pectobacterium atrosepticum (strain SCRI 1043 / ATCC BAA-672) (Erwinia carotovora subsp. atroseptica).